The sequence spans 206 residues: ATP synthase subunit b (206 aa).

A helical membrane pass occupies residues 14–34; it reads VMMPAAVCAAVIGLSALGFAA.

The protein belongs to the ATPase B chain family. As to quaternary structure, F-type ATPases have 2 components, F(1) - the catalytic core - and F(0) - the membrane proton channel. F(1) has five subunits: alpha(3), beta(3), gamma(1), delta(1), epsilon(1). F(0) has three main subunits: a(1), b(2) and c(10-14). The alpha and beta chains form an alternating ring which encloses part of the gamma chain. F(1) is attached to F(0) by a central stalk formed by the gamma and epsilon chains, while a peripheral stalk is formed by the delta and b chains.

The protein localises to the cell inner membrane. Its function is as follows. F(1)F(0) ATP synthase produces ATP from ADP in the presence of a proton or sodium gradient. F-type ATPases consist of two structural domains, F(1) containing the extramembraneous catalytic core and F(0) containing the membrane proton channel, linked together by a central stalk and a peripheral stalk. During catalysis, ATP synthesis in the catalytic domain of F(1) is coupled via a rotary mechanism of the central stalk subunits to proton translocation. Component of the F(0) channel, it forms part of the peripheral stalk, linking F(1) to F(0). The polypeptide is ATP synthase subunit b (Geobacter metallireducens (strain ATCC 53774 / DSM 7210 / GS-15)).